Reading from the N-terminus, the 334-residue chain is Transcription initiation factor IIB (334 aa).

The TFIIB-type zinc-finger motif lies at 34 to 65; sequence TESVCPECKSRQLVHDYERAELVCQNCGLVID. Residues Cys-38, Cys-41, Cys-57, and Cys-60 each coordinate Zn(2+). 2 consecutive repeat copies span residues 151–234 and 245–326.

It belongs to the TFIIB family.

Its function is as follows. Stabilizes TBP binding to an archaeal box-A promoter. Also responsible for recruiting RNA polymerase II to the pre-initiation complex (DNA-TBP-TFIIB). This chain is Transcription initiation factor IIB, found in Methanosphaerula palustris (strain ATCC BAA-1556 / DSM 19958 / E1-9c).